A 588-amino-acid chain; its full sequence is MDLAVSNEDSQILLKDKNVLQETVLDKYRTSGQITQTALKFVTDLINDVYHYKKVQTPLSISELCLMADSFIVNRLEQYYKHKVNERGIALPTMIDVDAVASGWCPEVDDTENIKKWNNNSDETSPFASSITGYLRHGDVVKISLGCHIDGYTSQVTHTMVIYPTDETNTKPTGPLLGSKADAVAASHIASESVTALLACSLTPEKLPQSLRNANTNSVTGHQIRSVVDTIAKAYNCAVVPGSRVRRIRRFLAGQNEGIVAEKDYKGVVWTEAHQEANLLANTEVQDIVVANNQNKLVASSAIPSDDFSVDVGEVYLIDLKFCPLTDCQKKGLITLETVDSYTGKSHKKNQLIARSGAYVRDYAQSYTLKLKTARQLLTKIDKNGVYPLKLSHLSTDFPLTEFTAEESDAVKKDLRSFRLGMNEITNNFLCVETPIQVAKWVPWDHILNSTNKNGALSYDASAALTLPGHEIPLPKLGISGIKLKSLMNSTNEVMTLPVARECSTVILCGSDVSVSGKPELFRLTGGSKTAQPSWVHSARELNPADPVVQGIFNLAELSKDKRFGLTMRETQPMKKNINLASDTTMEM.

The protein belongs to the peptidase M24 family. In terms of assembly, component of the nucleoplasmic and cytoplasmic pre-60S ribosomal particles.

It is found in the cytoplasm. Its subcellular location is the nucleus. Probable metalloprotease involved in proper assembly of pre-ribosomal particles during the biogenesis of the 60S ribosomal subunit. Accompanies the pre-60S particles to the cytoplasm. The polypeptide is Probable metalloprotease ARX1 (ARX1) (Candida glabrata (strain ATCC 2001 / BCRC 20586 / JCM 3761 / NBRC 0622 / NRRL Y-65 / CBS 138) (Yeast)).